The primary structure comprises 415 residues: Maintenance of mitochondrial morphology protein 1 (415 aa).

The Lumenal portion of the chain corresponds to M1–G18. A helical membrane pass occupies residues L19 to F39. The Cytoplasmic segment spans residues G40 to P415. The 217-residue stretch at Q114–P330 folds into the SMP-LTD domain. Residues I373–R389 show a composition bias toward basic and acidic residues. The interval I373–P415 is disordered. Positions G404–P415 are enriched in low complexity.

This sequence belongs to the MMM1 family. As to quaternary structure, homodimer. Component of the ER-mitochondria encounter structure (ERMES) or MDM complex, composed of mmm-1, mdm10, mdm12 and mdm34. A mmm-1 homodimer associates with one molecule of mdm12 on each side in a pairwise head-to-tail manner, and the SMP-LTD domains of mmm-1 and mdm12 generate a continuous hydrophobic tunnel for phospholipid trafficking.

Its subcellular location is the endoplasmic reticulum membrane. Its function is as follows. Component of the ERMES/MDM complex, which serves as a molecular tether to connect the endoplasmic reticulum (ER) and mitochondria. Components of this complex are involved in the control of mitochondrial shape and protein biogenesis, and function in nonvesicular lipid trafficking between the ER and mitochondria. The mdm12-mmm-1 subcomplex functions in the major beta-barrel assembly pathway that is responsible for biogenesis of all outer membrane beta-barrel proteins, and acts in a late step after the SAM complex. The mdm10-mdm12-mmm-1 subcomplex further acts in the TOM40-specific pathway after the action of the mdm12-mmm-1 complex. Essential for establishing and maintaining the structure of mitochondria and maintenance of mtDNA nucleoids. This is Maintenance of mitochondrial morphology protein 1 (mmm-1) from Neurospora crassa (strain ATCC 24698 / 74-OR23-1A / CBS 708.71 / DSM 1257 / FGSC 987).